The following is a 552-amino-acid chain: Non-structural protein NS1 (552 aa).

Belongs to the orbivirus non-structural protein NS1 family.

In Bluetongue virus 10 (isolate USA) (BTV 10), this protein is Non-structural protein NS1 (Segment-5).